The following is a 729-amino-acid chain: Monosaccharide-sensing protein 3 (729 aa).

6 consecutive transmembrane segments (helical) span residues 5–25, 46–66, 81–101, 104–124, 135–155, and 165–185; these read VLVALAAAIGNMLQGWDNATI, GLIVAMSLIGATLITTFSGPV, VLYFLSSIVMFWSPNVYVLLF, LLDGFGIGLAVTLVPIYISET, TFPQFCGSGGMFLSYCLVFGM, and LMLGVLSIPSIAYFVLAAFFL. The interval 337 to 372 is disordered; sequence QESQWDPERNNEDSSDQDENLNSPLLSPQTTEPDDY. Over residues 356–367 the composition is skewed to polar residues; sequence NLNSPLLSPQTT. Residue serine 446 is modified to Phosphoserine. The next 6 membrane-spanning stretches (helical) occupy residues 511–531, 557–577, 581–601, 610–630, 650–670, and 673–693; these read ALMVGVGLQILQQFAGINGVM, ASLLISALTTLLMLPCILVSM, MLSTIPILILSLVTLVIGSLV, LISTASVTVYLSCFVMGFGAI, ICALTFWICDIIVTYTLPVML, and IGIAGVFGIYAIVCAVAWVFV.

This sequence belongs to the major facilitator superfamily. Sugar transporter (TC 2.A.1.1) family. Weakly expressed.

The protein resides in the vacuole membrane. It carries out the reaction D-glucose(out) + H(+)(in) = D-glucose(in) + H(+)(out). The catalysed reaction is sucrose(out) + H(+)(in) = sucrose(in) + H(+)(out). Its function is as follows. Sugar proton-coupled antiporter which contributes to vacuolar sugar import (e.g. monosaccharides including glucose,sucrose and fructose), particularly during stress responses (e.g. in response to cold). The polypeptide is Monosaccharide-sensing protein 3 (Arabidopsis thaliana (Mouse-ear cress)).